We begin with the raw amino-acid sequence, 174 residues long: Negative modulator of initiation of replication (174 aa).

Belongs to the SeqA family. In terms of assembly, homodimer. Polymerizes to form helical filaments.

It localises to the cytoplasm. Its function is as follows. Negative regulator of replication initiation, which contributes to regulation of DNA replication and ensures that replication initiation occurs exactly once per chromosome per cell cycle. Binds to pairs of hemimethylated GATC sequences in the oriC region, thus preventing assembly of replication proteins and re-initiation at newly replicated origins. Repression is relieved when the region becomes fully methylated. In Pseudoalteromonas atlantica (strain T6c / ATCC BAA-1087), this protein is Negative modulator of initiation of replication.